A 115-amino-acid chain; its full sequence is Transcription initiation factor IIA subunit 2 (115 aa).

Belongs to the TFIIA subunit 2 family. As to quaternary structure, TFIIA is a heterodimer of the large unprocessed subunit 1 and a small subunit gamma.

The protein resides in the nucleus. Its function is as follows. TFIIA is a component of the transcription machinery of RNA polymerase II and plays an important role in transcriptional activation. TFIIA in a complex with tbp mediates transcriptional activity. This Dictyostelium discoideum (Social amoeba) protein is Transcription initiation factor IIA subunit 2 (gtf2a2).